We begin with the raw amino-acid sequence, 558 residues long: Undecaprenyl phosphate-alpha-4-amino-4-deoxy-L-arabinose arabinosyl transferase 1 (558 aa).

Helical transmembrane passes span 4–24 (GAGL…LVPL), 87–107 (FASV…SWTV), 115–135 (LLAA…TYSV), 136–156 (LDPM…FALR), 178–198 (FMTK…PVAL), 207–227 (LGYG…WALA), 257–277 (APFW…LGLL), 295–315 (FLLL…KGKL), 316–336 (LTYI…YGRE), 355–375 (AFAL…LPWA), 383–403 (WPRI…AAVS), and 411–431 (WALA…IIPQ).

It belongs to the glycosyltransferase 83 family.

The protein resides in the cell inner membrane. It catalyses the reaction 4-amino-4-deoxy-alpha-L-arabinopyranosyl di-trans,octa-cis-undecaprenyl phosphate + lipid IVA = lipid IIA + di-trans,octa-cis-undecaprenyl phosphate.. It functions in the pathway lipopolysaccharide metabolism; 4-amino-4-deoxy-beta-L-arabinose-lipid A biosynthesis. Its function is as follows. Catalyzes the transfer of the L-Ara4N moiety of the glycolipid undecaprenyl phosphate-alpha-L-Ara4N to lipid A. The modified arabinose is attached to lipid A and is required for resistance to polymyxin and cationic antimicrobial peptides. In Sodalis glossinidius (strain morsitans), this protein is Undecaprenyl phosphate-alpha-4-amino-4-deoxy-L-arabinose arabinosyl transferase 1.